Consider the following 139-residue polypeptide: MGETIRFGISIDDKLLESFDQLIEHKGYANRSEALRDLIRASLIDVKWENGEEEMVGTVTLVFNHHVRDLSDKLTEHQHAYHHQIISALHVHLDAHNCLEVLVVRGKAREIKKIADELIGVKGVKHGKLVMTATGHDLH.

Residues His79, His90, His92, and Cys98 each contribute to the Ni(2+) site.

The protein belongs to the transcriptional regulatory CopG/NikR family. Requires Ni(2+) as cofactor.

In terms of biological role, transcriptional regulator. The sequence is that of Putative nickel-responsive regulator from Pelobacter propionicus (strain DSM 2379 / NBRC 103807 / OttBd1).